The chain runs to 569 residues: Oxygen-dependent choline dehydrogenase (569 aa).

Residue 9–38 (DYVIIGGGSAGSVLGNRLSEDKDKEVLVLE) participates in FAD binding. His475 serves as the catalytic Proton acceptor.

Belongs to the GMC oxidoreductase family. The cofactor is FAD.

It catalyses the reaction choline + A = betaine aldehyde + AH2. The enzyme catalyses betaine aldehyde + NAD(+) + H2O = glycine betaine + NADH + 2 H(+). The protein operates within amine and polyamine biosynthesis; betaine biosynthesis via choline pathway; betaine aldehyde from choline (cytochrome c reductase route): step 1/1. Its function is as follows. Involved in the biosynthesis of the osmoprotectant glycine betaine. Catalyzes the oxidation of choline to betaine aldehyde and betaine aldehyde to glycine betaine at the same rate. The sequence is that of Oxygen-dependent choline dehydrogenase from Staphylococcus aureus (strain MSSA476).